A 361-amino-acid polypeptide reads, in one-letter code: Peptide chain release factor 1 (361 aa).

Position 235 is an N5-methylglutamine (glutamine 235). Residues 288–307 form a disordered region; it reads AAEAQTRKLQVGSGDRSQRI.

It belongs to the prokaryotic/mitochondrial release factor family. Post-translationally, methylated by PrmC. Methylation increases the termination efficiency of RF1.

It localises to the cytoplasm. In terms of biological role, peptide chain release factor 1 directs the termination of translation in response to the peptide chain termination codons UAG and UAA. The protein is Peptide chain release factor 1 of Xanthomonas axonopodis pv. citri (strain 306).